A 531-amino-acid polypeptide reads, in one-letter code: MFFQGEGSIDIPVQDIISWIFDQARYEIEKPVYMDASDTSRSISWRQARTLVRQLAAGLRAAGLKDGDCVCLHSFNDIYYSILVLGIIAAGGIYMGTNPGYTSHELNYHLRVAQAKFVISDPEMLDRMIPAAEGNGIPKDRIWAFTTRESQVVATTGLAHWTALLKHGEADWHRLDDPNHAKTTVVARLFSSGTTGLPKPVDFTHYNIIAQHTLVYDAHPVPFETSRILSLPFFHAAAAPSAHFSTLRLGDPSYVLRRFEPDLFLTTVAKHNITECTAVPPIILTILSHCTTPKYSHSLQSLKIVRCGAAPLDKTTQARFQSLLAPDATFTQVWGMTESSCIATMIPYPESDDTGSVGRLLPGMEAKIINTDGDDITAPDTTGEVCLRGPTIVRGYFNLPSANESAFDKDGFYRTGDLGYCDGKTRKWYLLDRKKDIIKVRGFQVAPAEVEGVLRNHPRIQDVAVVGVYDAEAKTEYPRAYVVRQDQSLREEEVKEFVALRLAKYKRLDGGVRFIDAIPRNASGKILKRLL.

188-199 (RLFSSGTTGLPK) provides a ligand contact to AMP. The tract at residues 449-525 (EVEGVLRNHP…DAIPRNASGK (77 aa)) is AMP-binding.

Belongs to the ATP-dependent AMP-binding enzyme family.

The protein operates within secondary metabolite biosynthesis. Acyl-CoA ligase; part of the gene cluster that mediates the biosynthesis of azaphilones, a class of fungal metabolites characterized by a highly oxygenated pyrano-quinone bicyclic core and exhibiting a broad range of bioactivities. In the first step, the non-reducing polyketide synthase azaA forms the hexaketide precursor from successive condensations of five malonyl-CoA units, presumably with a simple acetyl-CoA starter unit. The reactive polyketide chain then undergoes a PT-mediated C2-C7 cyclization to afford the aromatic ring and is eventually released as an aldehyde through the R-domain. The putative ketoreductase azaE is proposed to catalyze the reduction of the terminal ketone resulting in the early culture product FK17-P2a. The monooxygenase azaH was demonstrated to be the only enzyme required to convert FK17-P2a to azanigerone E. AzaH first hydroxylates the benzaldehyde intermediate FK17-P2a at C4, which triggers the formation of the pyran-ring to afford azanigerone E. In parallel, the 2,4-dimethylhexanoyl chain is synthesized by the HR-PKS azaB and is proposed to be transferred to the C4-hydroxyl of azanigerone E by the acyltransferase azaD directly from the ACP domain of azaB. Alternatively, the 2,4-dimethyl-hexanoyl chain may be offloaded from the HR-PKS as a carboxylic acid and converted to an acyl-CoA by azaF. The resulting acyl-CoA molecule could then be taken up as a substrate by AzaD to form azanigerone B. To yield the carboxylic acid substituent in azanigerone A, the hydroxypropyl side chain of azanigerone B would need to undergo a C-C oxidative cleavage catalyzed by cytochrome P450 AzaI. AzaI is proposed to act on a vicinal diol that leads to a C-C bond scission either through an alkoxyradical intermediate or a peroxy complex. In the biosynthesis of azanigerone A, azanigerone B first undergoes hydroxylation at C10, possibly catalyzed by one of the two FAD-dependent monooxygenases encoded in the cluster, azaG or azaL, resulting in the vicinal diol azanigerone C. Oxidative cleavage of azanigerone C by azaI would yield the corresponding aldehyde derivative of azanigerone A. Finally, the dehydrogenase azaJ is proposed to convert the aldehyde functional group into the carboxylic acid, completing the conversion from azanigerone B to azanigerone A. Alternatively, the oxidation of aldehyde to carboxylic acid may be catalyzed by the same P450 enzyme azaI via consecutive oxidation or by endogenous alcohol dehydrogenase. In Aspergillus niger (strain ATCC 1015 / CBS 113.46 / FGSC A1144 / LSHB Ac4 / NCTC 3858a / NRRL 328 / USDA 3528.7), this protein is Acyl-CoA ligase azaF.